The primary structure comprises 776 residues: Semaphorin-4F (776 aa).

An N-terminal signal peptide occupies residues 1 to 39 (MLARAERPRPGPRPPPVFPFPPPLSLLLLLAILSAPVCG). The Extracellular portion of the chain corresponds to 40-665 (RVPRSVPRTS…GPSNRAHTVV (626 aa)). Residues 47–515 (RTSLPISEAD…SHTEVTQVNT (469 aa)) form the Sema domain. N-linked (GlcNAc...) asparagine glycosylation is present at asparagine 69. Cysteine 117 and cysteine 127 form a disulfide bridge. N-linked (GlcNAc...) asparagine glycosylation is present at asparagine 138. Disulfide bonds link cysteine 145–cysteine 154, cysteine 278–cysteine 389, and cysteine 302–cysteine 348. Asparagine 514 carries N-linked (GlcNAc...) asparagine glycosylation. The PSI domain occupies 517-568 (NCGRLQSCSECILAQDPVCAWSFRLDACVAHAGEHRGMVQDIESADVSSLCP). 3 disulfide bridges follow: cysteine 518-cysteine 535, cysteine 527-cysteine 544, and cysteine 592-cysteine 633. Residues 585–640 (VGHVVLPCSPSSAWASCVWHQPSGVTALTPRRDGLEVVVTPGAMGAYACECQEGGA) form the Ig-like C2-type domain. A helical membrane pass occupies residues 666–686 (GAGLVGFLLGVLAASLTLLLI). The Cytoplasmic portion of the chain corresponds to 687-776 (GRRQQRRRQR…PLATCDETSI (90 aa)). Residues 702-741 (DKVGLDLGAPPSGTTSYSQDPPSPSPEDERLPLALGKRGS) are disordered. Serine 724 and serine 726 each carry phosphoserine. Residues 774-776 (TSI) carry the PDZ-binding motif.

Belongs to the semaphorin family. In terms of assembly, interacts (via PDZ-binding motif) with DLG4/SAP90 (via PDZ domain 2); this interaction may promote translocation of DLG4/SAP90 to the membrane. In terms of tissue distribution, expressed at low levels in the developing embryo. Expressed at high levels in the lung and adult central nervous system, including the dorsal root ganglia.

It localises to the cell membrane. It is found in the postsynaptic density. Its subcellular location is the perikaryon. The protein resides in the cell projection. The protein localises to the dendrite. In terms of biological role, probable cell surface receptor that regulates oligodendroglial precursor cell migration. Might also regulate differentiation of oligodendroglial precursor cells. Has growth cone collapse activity against retinal ganglion-cell axons. The chain is Semaphorin-4F (Sema4f) from Rattus norvegicus (Rat).